Reading from the N-terminus, the 490-residue chain is Aspartyl/glutamyl-tRNA(Asn/Gln) amidotransferase subunit B (490 aa).

It belongs to the GatB/GatE family. GatB subfamily. In terms of assembly, heterotrimer of A, B and C subunits.

It catalyses the reaction L-glutamyl-tRNA(Gln) + L-glutamine + ATP + H2O = L-glutaminyl-tRNA(Gln) + L-glutamate + ADP + phosphate + H(+). The catalysed reaction is L-aspartyl-tRNA(Asn) + L-glutamine + ATP + H2O = L-asparaginyl-tRNA(Asn) + L-glutamate + ADP + phosphate + 2 H(+). Its function is as follows. Allows the formation of correctly charged Asn-tRNA(Asn) or Gln-tRNA(Gln) through the transamidation of misacylated Asp-tRNA(Asn) or Glu-tRNA(Gln) in organisms which lack either or both of asparaginyl-tRNA or glutaminyl-tRNA synthetases. The reaction takes place in the presence of glutamine and ATP through an activated phospho-Asp-tRNA(Asn) or phospho-Glu-tRNA(Gln). In Burkholderia mallei (strain NCTC 10247), this protein is Aspartyl/glutamyl-tRNA(Asn/Gln) amidotransferase subunit B.